The sequence spans 276 residues: Urease accessory protein UreD (276 aa).

It belongs to the UreD family. UreD, UreF and UreG form a complex that acts as a GTP-hydrolysis-dependent molecular chaperone, activating the urease apoprotein by helping to assemble the nickel containing metallocenter of UreC. The UreE protein probably delivers the nickel.

The protein localises to the cytoplasm. Functionally, required for maturation of urease via the functional incorporation of the urease nickel metallocenter. This is Urease accessory protein UreD from Verminephrobacter eiseniae (strain EF01-2).